The following is a 554-amino-acid chain: Esterase cest-33 (554 aa).

G2 carries the N-myristoyl glycine lipid modification. Residues C76 and C98 are joined by a disulfide bond. S208 serves as the catalytic Acyl-ester intermediate. Active-site charge relay system residues include E331 and H446.

The protein belongs to the type-B carboxylesterase/lipase family.

Its subcellular location is the cytoplasm. The protein localises to the cell membrane. It catalyses the reaction a carboxylic ester + H2O = an alcohol + a carboxylate + H(+). The polypeptide is Esterase cest-33 (Caenorhabditis elegans).